The primary structure comprises 57 residues: UPF0391 membrane protein bsl6560 (57 aa).

2 consecutive transmembrane segments (helical) span residues 4-24 (WVVT…GGIA) and 30-50 (IAKI…VVGL).

The protein belongs to the UPF0391 family.

The protein localises to the cell membrane. The sequence is that of UPF0391 membrane protein bsl6560 from Bradyrhizobium diazoefficiens (strain JCM 10833 / BCRC 13528 / IAM 13628 / NBRC 14792 / USDA 110).